A 101-amino-acid polypeptide reads, in one-letter code: Small ribosomal subunit protein uS14 (101 aa).

It belongs to the universal ribosomal protein uS14 family. As to quaternary structure, part of the 30S ribosomal subunit. Contacts proteins S3 and S10.

Binds 16S rRNA, required for the assembly of 30S particles and may also be responsible for determining the conformation of the 16S rRNA at the A site. In Stenotrophomonas maltophilia (strain K279a), this protein is Small ribosomal subunit protein uS14.